Consider the following 101-residue polypeptide: MIPGELFPAEGEILLNAERAQITLVVSNAGDRPVQVGSHYHFAETNPALEFDREAARGMRLDIPAGTAVRFEPGQTREVRLVSYAGSREVYGFNGRIMGKL.

The protein belongs to the urease beta subunit family. Heterotrimer of UreA (gamma), UreB (beta) and UreC (alpha) subunits. Three heterotrimers associate to form the active enzyme.

It is found in the cytoplasm. It carries out the reaction urea + 2 H2O + H(+) = hydrogencarbonate + 2 NH4(+). The protein operates within nitrogen metabolism; urea degradation; CO(2) and NH(3) from urea (urease route): step 1/1. The polypeptide is Urease subunit beta (Cereibacter sphaeroides (strain ATCC 17029 / ATH 2.4.9) (Rhodobacter sphaeroides)).